A 60-amino-acid polypeptide reads, in one-letter code: Large ribosomal subunit protein uL30 (60 aa).

This sequence belongs to the universal ribosomal protein uL30 family. Part of the 50S ribosomal subunit.

This Ligilactobacillus salivarius (strain UCC118) (Lactobacillus salivarius) protein is Large ribosomal subunit protein uL30.